The following is a 444-amino-acid chain: UPF0761 membrane protein RC1_0578 (444 aa).

The next 6 helical transmembrane spans lie at 49–69 (LLAL…FPAY), 103–123 (AAAL…LLFF), 145–165 (LLSF…SLSV), 186–206 (FMLP…MIPN), 219–239 (IAAA…IAAF), and 248–268 (ALSV…VVLF). A disordered region spans residues 423–444 (SGQPSGQVETAVRQRTGLQGRI).

This sequence belongs to the UPF0761 family.

It localises to the cell inner membrane. This is UPF0761 membrane protein RC1_0578 from Rhodospirillum centenum (strain ATCC 51521 / SW).